A 315-amino-acid polypeptide reads, in one-letter code: 4-hydroxy-3-methylbut-2-enyl diphosphate reductase (315 aa).

A [4Fe-4S] cluster-binding site is contributed by Cys12. (2E)-4-hydroxy-3-methylbut-2-enyl diphosphate contacts are provided by His41 and His74. Positions 41 and 74 each coordinate dimethylallyl diphosphate. Residues His41 and His74 each contribute to the isopentenyl diphosphate site. Position 96 (Cys96) interacts with [4Fe-4S] cluster. His124 is a binding site for (2E)-4-hydroxy-3-methylbut-2-enyl diphosphate. His124 is a dimethylallyl diphosphate binding site. His124 is a binding site for isopentenyl diphosphate. Glu126 serves as the catalytic Proton donor. Thr168 is a (2E)-4-hydroxy-3-methylbut-2-enyl diphosphate binding site. A [4Fe-4S] cluster-binding site is contributed by Cys198. The (2E)-4-hydroxy-3-methylbut-2-enyl diphosphate site is built by Ser226, Ser227, Asn228, and Ser270. Positions 226, 227, 228, and 270 each coordinate dimethylallyl diphosphate. Ser226, Ser227, Asn228, and Ser270 together coordinate isopentenyl diphosphate.

This sequence belongs to the IspH family. [4Fe-4S] cluster is required as a cofactor.

The catalysed reaction is isopentenyl diphosphate + 2 oxidized [2Fe-2S]-[ferredoxin] + H2O = (2E)-4-hydroxy-3-methylbut-2-enyl diphosphate + 2 reduced [2Fe-2S]-[ferredoxin] + 2 H(+). The enzyme catalyses dimethylallyl diphosphate + 2 oxidized [2Fe-2S]-[ferredoxin] + H2O = (2E)-4-hydroxy-3-methylbut-2-enyl diphosphate + 2 reduced [2Fe-2S]-[ferredoxin] + 2 H(+). Its pathway is isoprenoid biosynthesis; dimethylallyl diphosphate biosynthesis; dimethylallyl diphosphate from (2E)-4-hydroxy-3-methylbutenyl diphosphate: step 1/1. It functions in the pathway isoprenoid biosynthesis; isopentenyl diphosphate biosynthesis via DXP pathway; isopentenyl diphosphate from 1-deoxy-D-xylulose 5-phosphate: step 6/6. Functionally, catalyzes the conversion of 1-hydroxy-2-methyl-2-(E)-butenyl 4-diphosphate (HMBPP) into a mixture of isopentenyl diphosphate (IPP) and dimethylallyl diphosphate (DMAPP). Acts in the terminal step of the DOXP/MEP pathway for isoprenoid precursor biosynthesis. The chain is 4-hydroxy-3-methylbut-2-enyl diphosphate reductase from Pseudomonas fluorescens (strain SBW25).